A 537-amino-acid chain; its full sequence is Phosphoenolpyruvate carboxykinase (ATP) (537 aa).

Residues Arg-61, Tyr-195, and Lys-201 each contribute to the substrate site. ATP contacts are provided by residues Lys-201, His-220, and 236-244 (GLSGTGKTT). The Mn(2+) site is built by Lys-201 and His-220. Asp-257 contacts Mn(2+). ATP is bound by residues Glu-285, Arg-323, and Thr-448. Substrate is bound at residue Arg-323.

This sequence belongs to the phosphoenolpyruvate carboxykinase (ATP) family. Requires Mn(2+) as cofactor.

Its subcellular location is the cytoplasm. The enzyme catalyses oxaloacetate + ATP = phosphoenolpyruvate + ADP + CO2. Its pathway is carbohydrate biosynthesis; gluconeogenesis. In terms of biological role, involved in the gluconeogenesis. Catalyzes the conversion of oxaloacetate (OAA) to phosphoenolpyruvate (PEP) through direct phosphoryl transfer between the nucleoside triphosphate and OAA. The sequence is that of Phosphoenolpyruvate carboxykinase (ATP) from Azorhizobium caulinodans (strain ATCC 43989 / DSM 5975 / JCM 20966 / LMG 6465 / NBRC 14845 / NCIMB 13405 / ORS 571).